A 287-amino-acid polypeptide reads, in one-letter code: Cyclopropane mycolic acid synthase 1 (287 aa).

Residues 33–34, 68–76, 94–99, and 123–124 each bind S-adenosyl-L-methionine; these read YS, LLDVGCGWG, TLSKNQ, and WE. The active site involves C269.

Belongs to the CFA/CMAS family. In terms of assembly, homodimer.

Its subcellular location is the cytoplasm. It carries out the reaction a 1-acyl-2-(9Z)-enoyl-sn-glycero-3-phospholipid + S-adenosyl-L-methionine = a 1-acyl-2-(9-cyclopronane)-acyl-sn-glycero-3-phospholipid + S-adenosyl-L-homocysteine + H(+). It functions in the pathway lipid metabolism; mycolic acid biosynthesis. Functionally, catalyzes the conversion of a double bond to a cyclopropane ring at the distal position of an alpha mycolic acid via the transfer of a methylene group from S-adenosyl-L-methionine. Cyclopropanated mycolic acids are key factors participating in cell envelope permeability, host immunomodulation and persistence. In Mycobacterium tuberculosis (strain CDC 1551 / Oshkosh), this protein is Cyclopropane mycolic acid synthase 1 (cmaA1).